Here is a 231-residue protein sequence, read N- to C-terminus: Small ribosomal subunit protein uS3 (231 aa).

The 80-residue stretch at 18–97 folds into the KH type-2 domain; that stretch reads VDEYLAKQFY…NPELNARVMA (80 aa).

This sequence belongs to the universal ribosomal protein uS3 family. As to quaternary structure, part of the 30S ribosomal subunit.

Functionally, binds the lower part of the 30S subunit head. The sequence is that of Small ribosomal subunit protein uS3 from Sulfolobus acidocaldarius (strain ATCC 33909 / DSM 639 / JCM 8929 / NBRC 15157 / NCIMB 11770).